The sequence spans 431 residues: MVNLEPMHTEIKMSGDVADSTDTRSTFGQVEPGNDRNGLDFNRQIKTEDLGDSLQQTLSHRPCHLSQGPTMMPGNQMSGDMASLHPLQQLVLVPGHLQSVSQFLLSQTPPGQQGLQPNLLSFPQQQSTLLLPQTGPGLASQAVGRPGLSGSSLEPHLDAPQHLPGPKHLPGPGGNDEPTDLEELEKFAKTFKQRRIKLGFTQGDVGLAMGKLYGNDFSQTTISRFEALNLSFKNMCKLKPLLEKWLNDAESSPSDPSASTPSSYPTLSEVFGRKRKKRTSIETNIRLTLEKRFQDNPKPSSEEISMIAEQLSMEKEVVRVWFCNRRQKEKRINCPVATPVKPPIYNSRLVSPSGSLGPLSVPPVHSTMPGTVTSSCSPGNNSRPSSPGSGLHASSPTASQNNSKAAMNSSSSSSFNSSGSWYRWNHPTYLH.

Disordered stretches follow at residues 1 to 39, 130 to 180, and 248 to 267; these read MVNL…RNGL, LLPQ…EPTD, and DAES…YPTL. Residues 176–250 form the POU-specific domain; the sequence is DEPTDLEELE…LLEKWLNDAE (75 aa). Positions 251 to 267 are enriched in low complexity; the sequence is SSPSDPSASTPSSYPTL. The homeobox DNA-binding region spans 274–333; the sequence is KRKKRTSIETNIRLTLEKRFQDNPKPSSEEISMIAEQLSMEKEVVRVWFCNRRQKEKRIN. Composition is skewed to low complexity over residues 352–364, 374–390, and 398–419; these read PSGS…VPPV, SSCS…PGSG, and ASQN…NSSG. The interval 352–419 is disordered; it reads PSGSLGPLSV…SSSSSFNSSG (68 aa).

It belongs to the POU transcription factor family. Class-2 subfamily. As to quaternary structure, interacts (via the POU domain) with POU2AF1 and POU2AF2 in a DNA-dependent manner; this interaction recruits POU2AF2 to chromatin and increases POU2F3 transactivation activity. In terms of tissue distribution, skin, thymus, stomach and testis.

The protein localises to the nucleus. Transcription factor that binds to the octamer motif (5'-ATTTGCAT-3'). Regulates cell type-specific differentiation pathways. Involved in the regulation of keratinocytes differentiation. The POU2F3-POU2AF2/POU2AF3 complex drives the expression of tuft-cell-specific genes, a rare chemosensory cells that coordinate immune and neural functions within mucosal epithelial tissues. This chain is POU domain, class 2, transcription factor 3 (Pou2f3), found in Mus musculus (Mouse).